The primary structure comprises 268 residues: MLGITVFTTFLAYASSCGAPIFQPNLSARVVGGEDAIPHSWPWQISLQYLRDNTWRHTCGGTLITPNHVLTAAHCISNTLTYRVALGKNNLEVEDEAGSLYVGVDTIFVHEKWNSFLVRNDIALIKLAETVELSDTIQVACLPEEGSLLPQDYPCFVTGWGRLYTNGPIAAELQQGLQPVVDYATCSQRDWWGTTVKETMVCAGGDGVISACNGDSGGPLNCQAENGNWDVRGIVSFGSGLSCNTFKKPTVFTRVSAYIDWINQKLQL.

Residues Met1–Ser16 form the signal peptide. The propeptide at Cys17 to Arg29 is activation peptide. Cystine bridges form between Cys17/Cys141, Cys59/Cys75, Cys155/Cys222, Cys186/Cys202, and Cys212/Cys243. An N-linked (GlcNAc...) asparagine glycan is attached at Asn25. The region spanning Val30–Leu268 is the Peptidase S1 domain. Catalysis depends on charge relay system residues His74 and Asp121. The active-site Charge relay system is the Ser216.

Belongs to the peptidase S1 family. Elastase subfamily. Monomer. The zymogen is secreted as a ternary complex composed of procarboxypeptidase A, chymotrypsinogen C and proproteinase E. As to expression, pancreas.

It localises to the secreted. It is found in the extracellular space. The catalysed reaction is Preferential cleavage: Leu-|-Xaa, Tyr-|-Xaa, Phe-|-Xaa, Met-|-Xaa, Trp-|-Xaa, Gln-|-Xaa, Asn-|-Xaa.. Its function is as follows. Regulates activation and degradation of trypsinogens and procarboxypeptidases by targeting specific cleavage sites within their zymogen precursors. Has chymotrypsin-type protease activity and hypocalcemic activity. The chain is Chymotrypsin-C (CTRC) from Bos taurus (Bovine).